The primary structure comprises 106 residues: Thioredoxin-like protein YusE (106 aa).

Residues 1–101 (MKELQEHELD…LYELIKQKSS (101 aa)) enclose the Thioredoxin domain. C26 and C29 are disulfide-bonded.

The polypeptide is Thioredoxin-like protein YusE (yusE) (Bacillus subtilis (strain 168)).